The following is a 743-amino-acid chain: 1,4-alpha-glucan branching enzyme GlgB (743 aa).

Asp-416 functions as the Nucleophile in the catalytic mechanism. Residue Glu-469 is the Proton donor of the active site.

It belongs to the glycosyl hydrolase 13 family. GlgB subfamily. Monomer.

It carries out the reaction Transfers a segment of a (1-&gt;4)-alpha-D-glucan chain to a primary hydroxy group in a similar glucan chain.. It participates in glycan biosynthesis; glycogen biosynthesis. In terms of biological role, catalyzes the formation of the alpha-1,6-glucosidic linkages in glycogen by scission of a 1,4-alpha-linked oligosaccharide from growing alpha-1,4-glucan chains and the subsequent attachment of the oligosaccharide to the alpha-1,6 position. The protein is 1,4-alpha-glucan branching enzyme GlgB of Shewanella baltica (strain OS195).